The primary structure comprises 307 residues: uncharacterized protein (307 aa).

To B.burgdorferi BB0340.

This is an uncharacterized protein from Treponema pallidum (strain Nichols).